A 311-amino-acid chain; its full sequence is Probable branched-chain-amino-acid aminotransferase (311 aa).

The residue at position 160 (lysine 160) is an N6-(pyridoxal phosphate)lysine.

This sequence belongs to the class-IV pyridoxal-phosphate-dependent aminotransferase family. It depends on pyridoxal 5'-phosphate as a cofactor.

It catalyses the reaction L-leucine + 2-oxoglutarate = 4-methyl-2-oxopentanoate + L-glutamate. The catalysed reaction is L-isoleucine + 2-oxoglutarate = (S)-3-methyl-2-oxopentanoate + L-glutamate. It carries out the reaction L-valine + 2-oxoglutarate = 3-methyl-2-oxobutanoate + L-glutamate. It functions in the pathway amino-acid biosynthesis; L-isoleucine biosynthesis; L-isoleucine from 2-oxobutanoate: step 4/4. The protein operates within amino-acid biosynthesis; L-leucine biosynthesis; L-leucine from 3-methyl-2-oxobutanoate: step 4/4. It participates in amino-acid biosynthesis; L-valine biosynthesis; L-valine from pyruvate: step 4/4. Its function is as follows. Acts on leucine, isoleucine and valine. The protein is Probable branched-chain-amino-acid aminotransferase (ilvE) of Aquifex aeolicus (strain VF5).